Here is a 505-residue protein sequence, read N- to C-terminus: Trans-cinnamate 4-monooxygenase (505 aa).

The chain crosses the membrane as a helical span at residues 3–23 (LLLLEKSLIAVFVAVILATVI). (E)-cinnamate contacts are provided by residues 213–218 (RSRLAQ) and A306. C447 contacts heme.

It belongs to the cytochrome P450 family. The cofactor is heme. Expressed in roots, leaves, stems, flowers and siliques.

The protein resides in the membrane. The catalysed reaction is (E)-cinnamate + reduced [NADPH--hemoprotein reductase] + O2 = (E)-4-coumarate + oxidized [NADPH--hemoprotein reductase] + H2O + H(+). It functions in the pathway phenylpropanoid metabolism; trans-4-coumarate biosynthesis; trans-4-coumarate from trans-cinnamate: step 1/1. Catalyzes the first oxidative step of the phenylpropanoid pathway in higher plants by transforming trans-cinnamate into p-coumarate. The compounds formed by this pathway are essential components for lignification, pollination, and defense against ultraviolet light, predators and pathogens. The protein is Trans-cinnamate 4-monooxygenase of Arabidopsis thaliana (Mouse-ear cress).